Here is a 189-residue protein sequence, read N- to C-terminus: Large ribosomal subunit protein eL20 (189 aa).

Belongs to the eukaryotic ribosomal protein eL20 family.

The protein resides in the cytoplasm. The polypeptide is Large ribosomal subunit protein eL20 (RPL18A) (Tetrahymena thermophila).